The sequence spans 472 residues: RING-H2 finger protein ATL13 (472 aa).

The chain crosses the membrane as a helical span at residues 51-71 (ILLIIIILSIIFFISGLLHLL). An RING-type; atypical zinc finger spans residues 134 to 176 (CAVCLCEFETEDKLRLLPKCSHAFHMDCIDTWLLSHSTCPLCR). The interval 320-340 (VSTKKQSSKNRGLPGHRTAMS) is disordered.

Belongs to the RING-type zinc finger family. ATL subfamily.

Its subcellular location is the membrane. It carries out the reaction S-ubiquitinyl-[E2 ubiquitin-conjugating enzyme]-L-cysteine + [acceptor protein]-L-lysine = [E2 ubiquitin-conjugating enzyme]-L-cysteine + N(6)-ubiquitinyl-[acceptor protein]-L-lysine.. Its pathway is protein modification; protein ubiquitination. This chain is RING-H2 finger protein ATL13 (ATL13), found in Arabidopsis thaliana (Mouse-ear cress).